The following is a 210-amino-acid chain: MSTRLVVSGTDTDVGKTVFSAALAGALDADYWKPVQAGRDDGTDALRVARLSGLPPERILPERYILNTPASPHYAARIDGITIDTNDLTPPPAKDRPLVIEGAGGLMVPINEDTLFIDVFARWKLPLVLCARTTLGTINHSLLSIEAVKRRDIPLVGIAFIGEDYAESERIICKIGGVRHLGRLPPLSPLTPEALRAAFITSFNLSDFTA.

Residue 13 to 18 (DVGKTV) participates in ATP binding. Position 17 (Thr-17) interacts with Mg(2+). Residue Lys-33 is part of the active site. Residues Arg-47 and Glu-101 each contribute to the Mg(2+) site. ATP-binding positions include 101–104 (EGAG) and 185–187 (PPL).

The protein belongs to the dethiobiotin synthetase family. In terms of assembly, homodimer. It depends on Mg(2+) as a cofactor.

Its subcellular location is the cytoplasm. It carries out the reaction (7R,8S)-7,8-diammoniononanoate + CO2 + ATP = (4R,5S)-dethiobiotin + ADP + phosphate + 3 H(+). It functions in the pathway cofactor biosynthesis; biotin biosynthesis; biotin from 7,8-diaminononanoate: step 1/2. In terms of biological role, catalyzes a mechanistically unusual reaction, the ATP-dependent insertion of CO2 between the N7 and N8 nitrogen atoms of 7,8-diaminopelargonic acid (DAPA, also called 7,8-diammoniononanoate) to form a ureido ring. The chain is ATP-dependent dethiobiotin synthetase BioD from Afipia carboxidovorans (strain ATCC 49405 / DSM 1227 / KCTC 32145 / OM5) (Oligotropha carboxidovorans).